The chain runs to 312 residues: tRNA-dihydrouridine(16) synthase (312 aa).

Residues 7–9 and Gln68 contribute to the FMN site; that span reads PME. The active-site Proton donor is the Cys98. FMN-binding positions include Lys139, 200–202, and 224–225; these read NGE and GR.

Belongs to the Dus family. DusC subfamily. FMN is required as a cofactor.

It catalyses the reaction 5,6-dihydrouridine(16) in tRNA + NADP(+) = uridine(16) in tRNA + NADPH + H(+). It carries out the reaction 5,6-dihydrouridine(16) in tRNA + NAD(+) = uridine(16) in tRNA + NADH + H(+). In terms of biological role, catalyzes the synthesis of 5,6-dihydrouridine (D), a modified base found in the D-loop of most tRNAs, via the reduction of the C5-C6 double bond in target uridines. Specifically modifies U16 in tRNAs. This is tRNA-dihydrouridine(16) synthase from Salmonella typhimurium (strain LT2 / SGSC1412 / ATCC 700720).